Reading from the N-terminus, the 780-residue chain is Exocyst complex component 3-like protein (780 aa).

This sequence belongs to the SEC6 family.

The protein resides in the cytoplasmic vesicle. The protein localises to the secretory vesicle. As part of the exocyst, may play a role in regulated exocytosis. The chain is Exocyst complex component 3-like protein (exoc3l1) from Danio rerio (Zebrafish).